A 146-amino-acid chain; its full sequence is Prefoldin subunit alpha (146 aa).

Belongs to the prefoldin alpha subunit family. Heterohexamer of two alpha and four beta subunits.

It is found in the cytoplasm. Functionally, molecular chaperone capable of stabilizing a range of proteins. Seems to fulfill an ATP-independent, HSP70-like function in archaeal de novo protein folding. The chain is Prefoldin subunit alpha from Methanococcus vannielii (strain ATCC 35089 / DSM 1224 / JCM 13029 / OCM 148 / SB).